A 260-amino-acid polypeptide reads, in one-letter code: Type III pantothenate kinase (260 aa).

Residue 6 to 13 (DSGNTNIV) participates in ATP binding. A substrate-binding site is contributed by 108 to 111 (GADR). Residue Asp110 is the Proton acceptor of the active site. Asp130 serves as a coordination point for K(+). Position 133 (Thr133) interacts with ATP. Thr185 serves as a coordination point for substrate.

It belongs to the type III pantothenate kinase family. In terms of assembly, homodimer. NH4(+) is required as a cofactor. K(+) serves as cofactor.

It is found in the cytoplasm. The enzyme catalyses (R)-pantothenate + ATP = (R)-4'-phosphopantothenate + ADP + H(+). The protein operates within cofactor biosynthesis; coenzyme A biosynthesis; CoA from (R)-pantothenate: step 1/5. Functionally, catalyzes the phosphorylation of pantothenate (Pan), the first step in CoA biosynthesis. The polypeptide is Type III pantothenate kinase (Paramagnetospirillum magneticum (strain ATCC 700264 / AMB-1) (Magnetospirillum magneticum)).